Reading from the N-terminus, the 1064-residue chain is WD repeat-containing protein on Y chromosome (1064 aa).

WD repeat units lie at residues 153–197, 326–365, 369–408, 459–498, 511–550, 598–638, 746–785, and 827–866; these read EEVT…IRTA, RVPLGVSTFFVAESHNIVVTGGPDTFVRIWDVYIPTEPSA, GHNGGIVMVFVQPEENKVYSVDYQKIIKVWDLQEHTLLQT, THAAPVSVVLYNRLFRNIVTCGLDSYIIVWDPWSGRRKII, IIDIEITAATFDPLEQFLLTGARDGTLKIWNYNNAVVVRN, FHTD…RRYS, KTGDCVLTMCTDRKNRYIYTGTAFGYIKVWHIVNYPEAEK, and AHLKAINSIAFINLPKIVFRGSHDYSCRLWTQGGRYLGTL. A compositionally biased stretch (basic and acidic residues) spans 914–924; sequence PAKRAEVKAPE. Disordered regions lie at residues 914–935 and 1023–1064; these read PAKRAEVKAPEDRDEETAQTDD and GSAL…QQSE. Acidic residues predominate over residues 925–935; it reads DRDEETAQTDD.

In Drosophila pseudoobscura pseudoobscura (Fruit fly), this protein is WD repeat-containing protein on Y chromosome.